A 481-amino-acid chain; its full sequence is Cardiolipin synthase A (481 aa).

2 helical membrane-spanning segments follow: residues 10 to 30 (FFGYLLGLIHLLGVVAALHAL) and 40 to 60 (IAWAMPLFFIPYLTLIPYLIF). PLD phosphodiesterase domains follow at residues 220 to 247 (VNFRNHRKIVVVDGLLGFIGGHNVGDEY) and 394 to 421 (QPGFLHQKVVLVDDEVSAIGSANLDNRS). Residues His225, Lys227, Asp232, His399, Lys401, and Asp406 contribute to the active site.

It belongs to the phospholipase D family. Cardiolipin synthase subfamily. ClsA sub-subfamily.

It is found in the cell inner membrane. The catalysed reaction is 2 a 1,2-diacyl-sn-glycero-3-phospho-(1'-sn-glycerol) = a cardiolipin + glycerol. Its function is as follows. Catalyzes the reversible phosphatidyl group transfer from one phosphatidylglycerol molecule to another to form cardiolipin (CL) (diphosphatidylglycerol) and glycerol. The sequence is that of Cardiolipin synthase A from Pseudomonas putida (Arthrobacter siderocapsulatus).